We begin with the raw amino-acid sequence, 301 residues long: MDAEAEVVHPVGIEMVHRTRPEDAFPRNWVRLGRDRFAVEAVLPHDHPFFAPVGDDLHDPLLVAEAMRQAAMLAFHAGYGIPLGYHFLLTELDYVCHPEHLGVGGEPTEIGLEVFCSDLKWRAGLPAQGRVGWAVHRGDRLAATGVAATRFSTPKAYRRMRGDVPVEGISLPETAPVPASPAGRARVEDVVLSGTGREGVWELRVDTRHPTLFQRPNDHVPGMLLLEAARQAACLVAGPAGIVPVEARTRFHRYSEFGSPCWIGAVVQPGADEDTVTVRVTGHQDGETVFSTVLSGPRAHG.

The protein belongs to the AfsA family.

The enzyme catalyses a medium-chain 3-oxoacyl-[ACP] + dihydroxyacetone phosphate = a (4-alkanoyl-5-oxo-2,5-dihydrofuran-3-yl)methyl phosphate + holo-[ACP] + H2O. Its function is as follows. Involved in the biosynthesis of A factor (2-isocapryloyl-3R-hydroxymethyl-gamma-butyrolactone), a gamma-butyrolactone autoregulator that triggers secondary metabolism and morphogenesis in Streptomyces. Catalyzes beta-ketoacyl transfer from 8-methyl-3-oxononanoyl-acyl carrier protein (ACP) to the hydroxyl group of dihydroxyacetone phosphate (DHAP), thus producing an 8-methyl-3-oxononanoyl-DHAP ester. The polypeptide is 2-oxo-3-(phosphooxy)propyl 3-oxoalkanoate synthase (Streptomyces griseus).